A 164-amino-acid polypeptide reads, in one-letter code: ATP synthase subunit b 2 (164 aa).

A helical membrane pass occupies residues 4 to 24 (TFWAFVGLVLFLALLVYFQIP).

The protein belongs to the ATPase B chain family. F-type ATPases have 2 components, F(1) - the catalytic core - and F(0) - the membrane proton channel. F(1) has five subunits: alpha(3), beta(3), gamma(1), delta(1), epsilon(1). F(0) has three main subunits: a(1), b(2) and c(10-14). The alpha and beta chains form an alternating ring which encloses part of the gamma chain. F(1) is attached to F(0) by a central stalk formed by the gamma and epsilon chains, while a peripheral stalk is formed by the delta and b chains.

The protein localises to the cell inner membrane. Its function is as follows. F(1)F(0) ATP synthase produces ATP from ADP in the presence of a proton or sodium gradient. F-type ATPases consist of two structural domains, F(1) containing the extramembraneous catalytic core and F(0) containing the membrane proton channel, linked together by a central stalk and a peripheral stalk. During catalysis, ATP synthesis in the catalytic domain of F(1) is coupled via a rotary mechanism of the central stalk subunits to proton translocation. Component of the F(0) channel, it forms part of the peripheral stalk, linking F(1) to F(0). This chain is ATP synthase subunit b 2, found in Bartonella tribocorum (strain CIP 105476 / IBS 506).